Here is a 922-residue protein sequence, read N- to C-terminus: Isoleucine--tRNA ligase (922 aa).

The short motif at 58-68 (PYANGDIHIGH) is the 'HIGH' region element. Glu552 provides a ligand contact to L-isoleucyl-5'-AMP. The short motif at 593-597 (KMSKS) is the 'KMSKS' region element. Residue Lys596 participates in ATP binding. Zn(2+)-binding residues include Cys885, Cys888, Cys905, and Cys908.

The protein belongs to the class-I aminoacyl-tRNA synthetase family. IleS type 1 subfamily. Monomer. Zn(2+) is required as a cofactor.

The protein localises to the cytoplasm. The catalysed reaction is tRNA(Ile) + L-isoleucine + ATP = L-isoleucyl-tRNA(Ile) + AMP + diphosphate. Catalyzes the attachment of isoleucine to tRNA(Ile). As IleRS can inadvertently accommodate and process structurally similar amino acids such as valine, to avoid such errors it has two additional distinct tRNA(Ile)-dependent editing activities. One activity is designated as 'pretransfer' editing and involves the hydrolysis of activated Val-AMP. The other activity is designated 'posttransfer' editing and involves deacylation of mischarged Val-tRNA(Ile). The protein is Isoleucine--tRNA ligase of Ruthia magnifica subsp. Calyptogena magnifica.